The chain runs to 466 residues: Probable sensor protein PcoS (466 aa).

Over 1 to 10 (MRFKISLTTR) the chain is Cytoplasmic. The helical transmembrane segment at 11–31 (LSLIFSAVMLTVWWLSSFILI) threads the bilayer. At 32–171 (STLNDYFDNQ…HTLLMDKLST (140 aa)) the chain is on the periplasmic side. Residues 172 to 192 (WLFWFNIGLVFISVFLGWLTT) form a helical membrane-spanning segment. Residues 193-246 (RIGLKPLREMTSLASSMTVHSLDQRLNPDLAPPEISETMQEFNNMFDRLEGAFR) form the HAMP domain. The Cytoplasmic portion of the chain corresponds to 193 to 466 (RIGLKPLREM…IVFKVRLLMD (274 aa)). The 213-residue stretch at 254–466 (DIAHELRTPV…IVFKVRLLMD (213 aa)) folds into the Histidine kinase domain. Histidine 257 carries the phosphohistidine; by autocatalysis modification.

It localises to the cell inner membrane. It catalyses the reaction ATP + protein L-histidine = ADP + protein N-phospho-L-histidine.. In terms of biological role, probable member of a two-component regulatory system PcoS/PcoR. May activate PcoR by phosphorylation. The chain is Probable sensor protein PcoS (pcoS) from Escherichia coli.